The primary structure comprises 213 residues: GTP cyclohydrolase 1 (213 aa).

Residues Cys104, His107, and Cys175 each coordinate Zn(2+).

It belongs to the GTP cyclohydrolase I family. As to quaternary structure, homomer.

The enzyme catalyses GTP + H2O = 7,8-dihydroneopterin 3'-triphosphate + formate + H(+). The protein operates within cofactor biosynthesis; 7,8-dihydroneopterin triphosphate biosynthesis; 7,8-dihydroneopterin triphosphate from GTP: step 1/1. The sequence is that of GTP cyclohydrolase 1 from Brucella suis (strain ATCC 23445 / NCTC 10510).